A 91-amino-acid polypeptide reads, in one-letter code: uncharacterized protein (91 aa).

Residues 71–91 (NRENNSRSSVKQIINQETEEE) are disordered. Polar residues predominate over residues 76-91 (SRSSVKQIINQETEEE).

This is an uncharacterized protein from Bacillus subtilis (strain 168).